The sequence spans 295 residues: MPVKVHGVILMNIEEWEEYRYVEAGIKESITLIEDPGLKKMVEHVCHSGGKRIRPIILLLVSEICSGSYSRSLNAALAVEMMHSASLIHDDLLDQGLVRRNLPSAPEKFGPSGALLCGDYLIAKSIAFISPYGEKVIQDFGKAGMDMAEGEVLDLKLEDESFGENDYFKCIYKKTASLFAISASIGAYTGGAEEELAERFSHFGNALGTAYQIVDDILEFLEVVEGKESKFTSETLPHIYMKSTSKEEALKKSIDCVKLHVAAAKETLETFRECPARDKLFQITDYITVDMLENL.

The isopentenyl diphosphate site is built by lysine 51, arginine 54, and histidine 83. Mg(2+) is bound by residues aspartate 90 and aspartate 94. Arginine 99 is a binding site for an all-trans-polyprenyl diphosphate. Residue arginine 100 participates in isopentenyl diphosphate binding. The an all-trans-polyprenyl diphosphate site is built by lysine 174, threonine 175, and glutamine 212.

Belongs to the FPP/GGPP synthase family. Homodimer. The cofactor is Mg(2+).

The enzyme catalyses isopentenyl diphosphate + (2E,6E,10E)-geranylgeranyl diphosphate = (2E,6E,10E,14E)-geranylfarnesyl diphosphate + diphosphate. Its function is as follows. Involved in biosynthesis of the polyprenyl side-chain of methanophenazine, an electron carrier utilized for methanogenesis. Catalyzes the condensation of isopentenyl pyrophosphate with the allylic pyrophosphates to yield geranylfarnesyl diphosphate (GFPP). It prefers geranylgeranyl diphosphate (GGPP) and farnesyl diphosphate (FPP) as allylic substrate. In Methanosarcina mazei (strain ATCC BAA-159 / DSM 3647 / Goe1 / Go1 / JCM 11833 / OCM 88) (Methanosarcina frisia), this protein is Geranylfarnesyl diphosphate synthase.